The chain runs to 371 residues: S-adenosylmethionine:tRNA ribosyltransferase-isomerase (371 aa).

The protein belongs to the QueA family. In terms of assembly, monomer.

The protein resides in the cytoplasm. The enzyme catalyses 7-aminomethyl-7-carbaguanosine(34) in tRNA + S-adenosyl-L-methionine = epoxyqueuosine(34) in tRNA + adenine + L-methionine + 2 H(+). It functions in the pathway tRNA modification; tRNA-queuosine biosynthesis. Functionally, transfers and isomerizes the ribose moiety from AdoMet to the 7-aminomethyl group of 7-deazaguanine (preQ1-tRNA) to give epoxyqueuosine (oQ-tRNA). The protein is S-adenosylmethionine:tRNA ribosyltransferase-isomerase of Prochlorococcus marinus (strain MIT 9303).